Reading from the N-terminus, the 497-residue chain is tRNA (adenine(58)-N(1))-methyltransferase non-catalytic subunit TRM6 (497 aa).

Residues 69-102 (TNGGSLQPKKKKEEPTSETKEAGTDNRNIIDDGK) form a disordered region. Residues 79–102 (KKEEPTSETKEAGTDNRNIIDDGK) show a composition bias toward basic and acidic residues. Positions 94–104 (NRNIIDDGKSQ) are substrate. Thr107 carries the post-translational modification Phosphothreonine. Substrate regions lie at residues 145-154 (KYIKKKKKKY) and 175-182 (REPGKINH). Residues 276–354 (SSEPKDIASV…EKQRRQEEQK (79 aa)) form a disordered region. Phosphoserine is present on residues Ser298 and Ser305. A compositionally biased stretch (basic and acidic residues) spans 311-354 (ESNHPEEQERMEIVSQDPDYKEPKESGSKKDYIQEKQRRQEEQK). Residues Arg349 and Arg377 each coordinate substrate. 2 substrate regions span residues 415 to 423 (RERGGVINL) and 434 to 441 (QVLPDRSH). The segment at 468–497 (PSLKSSTSTLESHKTEEPAAKKRKCPESDS) is disordered. Basic and acidic residues predominate over residues 478 to 497 (ESHKTEEPAAKKRKCPESDS).

Belongs to the TRM6/GCD10 family. Heterotetramer; composed of two copies of TRMT6 and two copies of TRMT61A.

Its subcellular location is the nucleus. Substrate-binding subunit of tRNA (adenine-N(1)-)-methyltransferase, which catalyzes the formation of N(1)-methyladenine at position 58 (m1A58) in initiator methionyl-tRNA. Together with the TRMT61A catalytic subunit, part of a mRNA N(1)-methyltransferase complex that mediates methylation of adenosine residues at the N(1) position of a small subset of mRNAs: N(1) methylation takes place in tRNA T-loop-like structures of mRNAs and is only present at low stoichiometries. The protein is tRNA (adenine(58)-N(1))-methyltransferase non-catalytic subunit TRM6 (TRMT6) of Bos taurus (Bovine).